The sequence spans 370 residues: Glutamate 5-kinase (370 aa).

K12 is a binding site for ATP. Positions 52, 139, and 151 each coordinate substrate. ATP is bound by residues 171 to 172 and 213 to 219; these read SD and TGGMFTK. The 79-residue stretch at 278–356 folds into the PUA domain; sequence QAHIAVDAGA…SDIESILGYS (79 aa).

The protein belongs to the glutamate 5-kinase family.

The protein resides in the cytoplasm. The enzyme catalyses L-glutamate + ATP = L-glutamyl 5-phosphate + ADP. Its pathway is amino-acid biosynthesis; L-proline biosynthesis; L-glutamate 5-semialdehyde from L-glutamate: step 1/2. Functionally, catalyzes the transfer of a phosphate group to glutamate to form L-glutamate 5-phosphate. The protein is Glutamate 5-kinase of Herpetosiphon aurantiacus (strain ATCC 23779 / DSM 785 / 114-95).